Consider the following 252-residue polypeptide: Large ribosomal subunit protein uL4 (252 aa).

The protein belongs to the universal ribosomal protein uL4 family. Part of the 50S ribosomal subunit.

Functionally, one of the primary rRNA binding proteins, this protein initially binds near the 5'-end of the 23S rRNA. It is important during the early stages of 50S assembly. It makes multiple contacts with different domains of the 23S rRNA in the assembled 50S subunit and ribosome. Its function is as follows. Forms part of the polypeptide exit tunnel. This chain is Large ribosomal subunit protein uL4, found in Archaeoglobus fulgidus (strain ATCC 49558 / DSM 4304 / JCM 9628 / NBRC 100126 / VC-16).